Reading from the N-terminus, the 92-residue chain is Sec-independent protein translocase protein TatA (92 aa).

The helical transmembrane segment at 1 to 21 (MGIFDWKHWIVILVVVVLVFG) threads the bilayer. Residues 43-92 (MNDDEKPADPTVTPAQPVPPVQPQATAQANPPHTIDVQAQKVEEPIRKDV) are disordered. Positions 65–74 (PQATAQANPP) are enriched in low complexity. Residues 83–92 (KVEEPIRKDV) show a composition bias toward basic and acidic residues.

It belongs to the TatA/E family. As to quaternary structure, the Tat system comprises two distinct complexes: a TatABC complex, containing multiple copies of TatA, TatB and TatC subunits, and a separate TatA complex, containing only TatA subunits. Substrates initially bind to the TatABC complex, which probably triggers association of the separate TatA complex to form the active translocon.

Its subcellular location is the cell inner membrane. Functionally, part of the twin-arginine translocation (Tat) system that transports large folded proteins containing a characteristic twin-arginine motif in their signal peptide across membranes. TatA could form the protein-conducting channel of the Tat system. This is Sec-independent protein translocase protein TatA from Pseudomonas fluorescens (strain Pf0-1).